We begin with the raw amino-acid sequence, 557 residues long: Probable protein kinase UbiB (557 aa).

The 389-residue stretch at 121–509 (AFDTTPLASA…RKLQTRVVTA (389 aa)) folds into the Protein kinase domain. Residues 127–135 (LASASIAQV) and Lys-154 each bind ATP. Asp-289 serves as the catalytic Proton acceptor. Transmembrane regions (helical) follow at residues 506 to 526 (VVTAITGSGLLVVAAVLYGLH) and 535 to 555 (VPVWSWISGGAGSAALLIAWL).

It belongs to the ABC1 family. UbiB subfamily.

The protein localises to the cell inner membrane. It functions in the pathway cofactor biosynthesis; ubiquinone biosynthesis [regulation]. Functionally, is probably a protein kinase regulator of UbiI activity which is involved in aerobic coenzyme Q (ubiquinone) biosynthesis. The protein is Probable protein kinase UbiB of Xanthomonas campestris pv. campestris (strain 8004).